The chain runs to 284 residues: 2-dehydro-3-deoxyphosphooctonate aldolase (284 aa).

Belongs to the KdsA family.

Its subcellular location is the cytoplasm. It carries out the reaction D-arabinose 5-phosphate + phosphoenolpyruvate + H2O = 3-deoxy-alpha-D-manno-2-octulosonate-8-phosphate + phosphate. Its pathway is carbohydrate biosynthesis; 3-deoxy-D-manno-octulosonate biosynthesis; 3-deoxy-D-manno-octulosonate from D-ribulose 5-phosphate: step 2/3. The protein operates within bacterial outer membrane biogenesis; lipopolysaccharide biosynthesis. The chain is 2-dehydro-3-deoxyphosphooctonate aldolase from Burkholderia orbicola (strain MC0-3).